A 339-amino-acid polypeptide reads, in one-letter code: Methionine import ATP-binding protein MetN 2 (339 aa).

An ABC transporter domain is found at 2–241 (ISFNNVSKVY…PKTKTTQNFV (240 aa)). An ATP-binding site is contributed by 38–45 (GFSGAGKS).

This sequence belongs to the ABC transporter superfamily. Methionine importer (TC 3.A.1.24) family. The complex is composed of two ATP-binding proteins (MetN), two transmembrane proteins (MetI) and a solute-binding protein (MetQ).

Its subcellular location is the cell membrane. The catalysed reaction is L-methionine(out) + ATP + H2O = L-methionine(in) + ADP + phosphate + H(+). It carries out the reaction D-methionine(out) + ATP + H2O = D-methionine(in) + ADP + phosphate + H(+). In terms of biological role, part of the ABC transporter complex MetNIQ involved in methionine import. Responsible for energy coupling to the transport system. This is Methionine import ATP-binding protein MetN 2 from Bacillus cereus (strain ZK / E33L).